Reading from the N-terminus, the 1876-residue chain is Phenolphthiocerol/phthiocerol polyketide synthase subunit A (1876 aa).

Positions alanine 9–glutamate 83 constitute a Carrier 1 domain. Position 43 is an O-(pantetheine 4'-phosphoryl)serine (serine 43). Positions aspartate 101 to glutamine 526 constitute a Ketosynthase family 3 (KS3) domain. Catalysis depends on for beta-ketoacyl synthase activity residues cysteine 273, histidine 408, and histidine 448. Residues serine 626–proline 950 form an acyltransferase region. Catalysis depends on serine 720, which acts as the For malonyltransferase activity. Positions histidine 997 to serine 1112 are N-terminal hotdog fold. In terms of domain architecture, PKS/mFAS DH spans histidine 997–valine 1267. Histidine 1027 serves as the catalytic Proton acceptor; for dehydratase activity. A disordered region spans residues threonine 1102 to alanine 1130. Over residues serine 1106–serine 1115 the composition is skewed to low complexity. The tract at residues alanine 1130–valine 1267 is C-terminal hotdog fold. Aspartate 1186 functions as the Proton donor; for dehydratase activity in the catalytic mechanism. Residue alanine 1491–leucine 1551 coordinates NADP(+). The interval alanine 1491–valine 1728 is beta-ketoacyl reductase. The Carrier 2 domain occupies glutamate 1759–valine 1836. Serine 1796 carries the O-(pantetheine 4'-phosphoryl)serine modification.

The cofactor is NADP(+). Pantetheine 4'-phosphate serves as cofactor.

It carries out the reaction icosanoyl-[(phenol)carboxyphthiodiolenone synthase] + 2 (S)-methylmalonyl-CoA + 3 malonyl-CoA + 5 NADPH + 10 H(+) = C32-carboxyphthiodiolenone-[(phenol)carboxyphthiodiolenone synthase] + 5 CO2 + 5 NADP(+) + 5 CoA + 2 H2O. The enzyme catalyses docosanoyl-[(phenol)carboxyphthiodiolenone synthase] + 2 (S)-methylmalonyl-CoA + 3 malonyl-CoA + 5 NADPH + 10 H(+) = C34-carboxyphthiodiolenone-[(phenol)carboxyphthiodiolenone synthase] + 5 CO2 + 5 NADP(+) + 5 CoA + 2 H2O. It catalyses the reaction 17-(4-hydroxyphenyl)heptadecanoyl-[(phenol)carboxyphthiodiolenone synthase] + 2 (S)-methylmalonyl-CoA + 3 malonyl-CoA + 5 NADPH + 10 H(+) = C35-(phenol)carboxyphthiodiolenone-[(phenol)carboxyphthiodiolenone synthase] + 5 CO2 + 5 NADP(+) + 5 CoA + 2 H2O. The catalysed reaction is 19-(4-hydroxyphenyl)nonadecanoyl-[(phenol)carboxyphthiodiolenone synthase] + 2 (S)-methylmalonyl-CoA + 3 malonyl-CoA + 5 NADPH + 10 H(+) = C37-(phenol)carboxyphthiodiolenone-[(phenol)carboxyphthiodiolenone synthase] + 5 CO2 + 5 NADP(+) + 5 CoA + 2 H2O. It functions in the pathway lipid metabolism; fatty acid biosynthesis. In terms of biological role, part of the PpsABCDE complex involved in the biosynthesis of the lipid core common to phthiocerols and phenolphthiocerols by successive additions of malonyl-CoA or methylmalonyl-CoA extender units. PpsA can accept as substrate the activated forms of either icosanoyl (C20), docosanoyl (C22) or lignoceroyl (C24) groups from FadD26, or a (4-hydroxyphenyl)-C17 or (4-hydroxyphenyl)-C19 fatty acyl from FadD29. PpsA initiates the biosynthesis and extends its substrate using a malonyl-CoA extender unit. The PpsB and PpsC proteins add the second and third malonyl-CoA extender units. PpsD adds an (R)-methylmalonyl unit and PpsE adds a second (R)-methylmalonyl unit. The incorporation of the methylmalonyl units results in formation of two branched methyl groups in the elongated product. This is Phenolphthiocerol/phthiocerol polyketide synthase subunit A (ppsA) from Mycobacterium tuberculosis (strain CDC 1551 / Oshkosh).